Here is a 710-residue protein sequence, read N- to C-terminus: MAGGPGPGEPVVPGAQHFLYEVPPWVMCRFYKVMDALEPADWCQFAALIVRDQTELRLCERSEQRTASVLWPWINRNARVADLVHILTHLQLLRARDIITAWHPPAPVVPPSTAAPRPSSISAGSEAGDWSPRKLQSSASTFLSPAFPGSQTHSESELLQVPLPVSLGPPLPSSAPSSTKSSPESPVSGLQRAHPSPFCWPFCEISQGTCNFSEELRIGEGGFGCVYRAVMRNTTYAVKRLKEEADLEWTMVKQSFLTEVEQLSRFRHPNIVDFAGYCAESGLYCLVYGFLPNGSLEDQLHLQTQACSPLSWPQRLDILLGTARAIQFLHQDSPSLIHGDIKSSNVLLDERLMPKLGDFGLARFSRFAGAKASQSSTVARTSTVRGTLAYLPEEYIKTGRLAVDTDTFSFGVVILETLAGQRAVRTQGAKTKYLKDLIEDEAEEAGVTLKSTQPTLWVGVATDAWAAPIAAQIYKKHLDSRPGPCPPQLGLALAQLACCCMHRRAKKRPPMTQVYKRLEGLQAGPPWELEVAGHGSPSPQENSYMSTTGSAQSGDEPWQPLVVTTRAPAQAAQQLQRSPNQPVESDESVPGLSATLHSWHLTPGSHPSPASFREASCTQGGTTRESSVRSSPGFQPTTMEGSPTGSSSLLSSEPPQIIINPARQKMVQKLALYEEGVLDSLQLLSSGFFPGLDLEPEKSQGPEESDEFQS.

One can recognise a Death domain in the interval 27–106 (MCRFYKVMDA…DIITAWHPPA (80 aa)). The residue at position 66 (Thr66) is a Phosphothreonine; by PKC/PRKCI. Residues 107-133 (PVVPPSTAAPRPSSISAGSEAGDWSPR) are disordered. A proST region region spans residues 110-211 (PPSTAAPRPS…FCEISQGTCN (102 aa)). Residues 111–123 (PSTAAPRPSSISA) show a composition bias toward low complexity. Ser131 carries the post-translational modification Phosphoserine. Residues Lys134 and Lys180 each participate in a glycyl lysine isopeptide (Lys-Gly) (interchain with G-Cter in ubiquitin) cross-link. Residues 169–190 (PPLPSSAPSSTKSSPESPVSGL) form a disordered region. Residues 174-188 (SAPSSTKSSPESPVS) are compositionally biased toward low complexity. At Thr209 the chain carries Phosphothreonine; by IRAK4. Residues 212–521 (FSEELRIGEG…TQVYKRLEGL (310 aa)) enclose the Protein kinase domain. Residues 218-226 (IGEGGFGCV) and Lys239 each bind ATP. The active-site Proton acceptor is Asp340. Residues 342 to 345 (KSSN) and Asp358 each bind ATP. Phosphoserine is present on Ser375. Residue Thr387 is modified to Phosphothreonine. Disordered stretches follow at residues 527 to 655 (WELE…SEPP) and 689 to 710 (FPGL…EFQS). The segment covering 537 to 553 (PSPQENSYMSTTGSAQS) has biased composition (polar residues). Ser553 bears the Phosphoserine mark. Positions 567 to 576 (APAQAAQQLQ) are enriched in low complexity. Over residues 616–639 (SCTQGGTTRESSVRSSPGFQPTTM) the composition is skewed to polar residues. A compositionally biased stretch (low complexity) spans 640-654 (EGSPTGSSSLLSSEP).

Belongs to the protein kinase superfamily. TKL Ser/Thr protein kinase family. Pelle subfamily. As to quaternary structure, homodimer. Forms a complex with TRAF6, PELI1, IRAK4 and MYD88. Direct binding of SMAD6 to PELI1 prevents complex formation and hence negatively regulates IL1R-TLR signaling and eventually NF-kappa-B-mediated gene expression. The TRAF6-PELI1-IRAK4-MYD88 complex recruits MAP3K7/TAK1, TAB1 and TAB2 to mediate NF-kappa-B activation. Interaction with MYD88 recruits IRAK1 to the stimulated receptor complex. Interacts with TOLLIP; this interaction occurs in the cytosol prior to receptor activation. Interacts with IL1RL1. Interacts (when polyubiquitinated) with IKBKG/NEMO. Interacts with RSAD2/viperin. Interacts with IRAK1BP1. Interacts with PELI2. Interacts with ZC3H12A; this interaction increases the interaction between ZC3H12A and IKBKB/IKKB. Interacts with IRAK4. Interacts with PELI3. Interacts with PELI1 and TRAF6. Interacts with INAVA; the interaction takes place upon PRR stimulation. Interacts (via C-terminus) with NFATC4 (via N-terminus). The cofactor is Mg(2+). Post-translationally, following recruitment on the activated receptor complex, phosphorylated on Thr-209, probably by IRAK4, resulting in a conformational change of the kinase domain, allowing further phosphorylations to take place. Thr-387 phosphorylation in the activation loop is required to achieve full enzymatic activity. In terms of processing, polyubiquitinated by TRAF6 after cell stimulation with IL-1-beta by PELI1, PELI2 and PELI3. Polyubiquitination occurs with polyubiquitin chains linked through 'Lys-63'. Ubiquitination promotes interaction with NEMO/IKBKG. Also sumoylated; leading to nuclear translocation. Highly expressed in liver, followed by kidney and skeletal muscle.

Its subcellular location is the cytoplasm. The protein resides in the nucleus. It is found in the lipid droplet. It catalyses the reaction L-seryl-[protein] + ATP = O-phospho-L-seryl-[protein] + ADP + H(+). The enzyme catalyses L-threonyl-[protein] + ATP = O-phospho-L-threonyl-[protein] + ADP + H(+). In terms of biological role, serine/threonine-protein kinase that plays a critical role in initiating innate immune response against foreign pathogens. Involved in Toll-like receptor (TLR) and IL-1R signaling pathways. Is rapidly recruited by MYD88 to the receptor-signaling complex upon TLR activation. Association with MYD88 leads to IRAK1 phosphorylation by IRAK4 and subsequent autophosphorylation and kinase activation. Phosphorylates E3 ubiquitin ligases Pellino proteins (PELI1, PELI2 and PELI3) to promote pellino-mediated polyubiquitination of IRAK1. Then, the ubiquitin-binding domain of IKBKG/NEMO binds to polyubiquitinated IRAK1 bringing together the IRAK1-MAP3K7/TAK1-TRAF6 complex and the NEMO-IKKA-IKKB complex. In turn, MAP3K7/TAK1 activates IKKs (CHUK/IKKA and IKBKB/IKKB) leading to NF-kappa-B nuclear translocation and activation. Alternatively, phosphorylates TIRAP to promote its ubiquitination and subsequent degradation. Phosphorylates the interferon regulatory factor 7 (IRF7) to induce its activation and translocation to the nucleus, resulting in transcriptional activation of type I IFN genes, which drive the cell in an antiviral state. When sumoylated, translocates to the nucleus and phosphorylates STAT3. This Mus musculus (Mouse) protein is Interleukin-1 receptor-associated kinase 1 (Irak1).